Here is a 506-residue protein sequence, read N- to C-terminus: Sodium-coupled neutral amino acid symporter 2 (506 aa).

The interval M1 to N23 is disordered. At M1–S76 the chain is on the cytoplasmic side. Residues M1–M96 are regulates protein turnover upon amino acid deprivation. 4 positions are modified to phosphoserine: S12, S21, S22, and S55. The chain crosses the membrane as a helical span at residues V77 to M96. N82 contacts Na(+). Over A97 to A102 the chain is Extracellular. Residues L103–L123 form a helical membrane-spanning segment. The Cytoplasmic portion of the chain corresponds to K124–N158. The chain crosses the membrane as a helical span at residues I159–I177. At Q178–G188 the chain is on the extracellular side. A helical membrane pass occupies residues L189–L209. The Cytoplasmic segment spans residues S210 to Y217. Residues L218–C238 form a helical membrane-spanning segment. At K239–T292 the chain is on the extracellular side. Cysteines 245 and 281 form a disulfide. 2 N-linked (GlcNAc...) asparagine glycosylation sites follow: N258 and N274. A helical membrane pass occupies residues V293–Y313. Topologically, residues E314–K329 are cytoplasmic. Residues I330–F350 traverse the membrane as a helical segment. Over Y351–L371 the chain is Extracellular. A helical membrane pass occupies residues L372–F392. T386 lines the Na(+) pocket. The Cytoplasmic segment spans residues P393 to H413. Residues S414 to I434 traverse the membrane as a helical segment. The Extracellular portion of the chain corresponds to R435–D436. A helical membrane pass occupies residues I437–F457. The Cytoplasmic segment spans residues Y458 to K472. Residues I473–L495 form a helical membrane-spanning segment. Residues D496 to H506 lie on the Extracellular side of the membrane.

This sequence belongs to the amino acid/polyamine transporter 2 family. In terms of processing, polyubiquitination by NEDD4L regulates the degradation and the activity of SLC38A2.

The protein localises to the cell membrane. The catalysed reaction is L-alanine(in) + Na(+)(in) = L-alanine(out) + Na(+)(out). The enzyme catalyses glycine(in) + Na(+)(in) = glycine(out) + Na(+)(out). It carries out the reaction L-serine(in) + Na(+)(in) = L-serine(out) + Na(+)(out). It catalyses the reaction L-proline(in) + Na(+)(in) = L-proline(out) + Na(+)(out). The catalysed reaction is L-methionine(in) + Na(+)(in) = L-methionine(out) + Na(+)(out). The enzyme catalyses L-histidine(in) + Na(+)(in) = L-histidine(out) + Na(+)(out). It carries out the reaction L-asparagine(in) + Na(+)(in) = L-asparagine(out) + Na(+)(out). It catalyses the reaction L-glutamine(in) + Na(+)(in) = L-glutamine(out) + Na(+)(out). The catalysed reaction is L-threonine(in) + Na(+)(in) = L-threonine(out) + Na(+)(out). The enzyme catalyses L-leucine(in) + Na(+)(in) = L-leucine(out) + Na(+)(out). It carries out the reaction L-phenylalanine(in) + Na(+)(in) = L-phenylalanine(out) + Na(+)(out). Inhibited by N-methyl-D-glucamine. Inhibited by choline. Allosteric regulation of sodium ions binding by pH. Functionally, symporter that cotransports neutral amino acids and sodium ions from the extracellular to the intracellular side of the cell membrane. The transport is pH-sensitive, Li(+)-intolerant, electrogenic, driven by the Na(+) electrochemical gradient and cotransports of neutral amino acids and sodium ions with a stoichiometry of 1:1. May function in the transport of amino acids at the blood-brain barrier. May function in the transport of amino acids in the supply of maternal nutrients to the fetus through the placenta. Maintains a key metabolic glutamine/glutamate balance underpinning retrograde signaling by dendritic release of the neurotransmitter glutamate. Transports L-proline in differentiating osteoblasts for the efficient synthesis of proline-enriched proteins and provides proline essential for osteoblast differentiation and bone formation during bone development. The polypeptide is Sodium-coupled neutral amino acid symporter 2 (Pan paniscus (Pygmy chimpanzee)).